The sequence spans 419 residues: Acyl-[acyl-carrier-protein] desaturase 6, chloroplastic (419 aa).

The N-terminal 54 residues, 1 to 54 (MAATATMAMPLANRLRCKPNTNSSSPSRTLFGRRVTMISSSRWGSAVSGSAIMS), are a transit peptide targeting the chloroplast. Residues glutamate 151, glutamate 189, histidine 192, glutamate 242, glutamate 277, and histidine 280 each coordinate Fe cation.

Belongs to the fatty acid desaturase type 2 family. In terms of assembly, homodimer. The cofactor is Fe(2+).

It localises to the plastid. The protein resides in the chloroplast. The protein operates within lipid metabolism; fatty acid metabolism. Its function is as follows. Introduces a cis double bond in the acyl chain of an acyl-[acyl-carrier protein]. The polypeptide is Acyl-[acyl-carrier-protein] desaturase 6, chloroplastic (Oryza sativa subsp. japonica (Rice)).